The primary structure comprises 379 residues: Putative acetyl-CoA C-acetyltransferase VraB (379 aa).

Cysteine 86 serves as the catalytic Acyl-thioester intermediate. Histidine 338 serves as the catalytic Proton acceptor.

It belongs to the thiolase-like superfamily. Thiolase family.

The chain is Putative acetyl-CoA C-acetyltransferase VraB (vraB) from Staphylococcus aureus (strain Mu3 / ATCC 700698).